The following is an 84-amino-acid chain: MPDAFAAADQTLDARGLRCPEPVMMVRKAVRHMADGQTLLIISDDPATTRDIPGFCQFMEHTLLAQATEQLPYRYLLRKGRAAA.

Cys19 acts as the Cysteine persulfide intermediate in catalysis.

It belongs to the sulfur carrier protein TusA family. Interacts with IscS.

It is found in the cytoplasm. Its pathway is tRNA modification. Sulfur carrier protein involved in sulfur trafficking in the cell. Part of a sulfur-relay system required for 2-thiolation during synthesis of 2-thiouridine of the modified wobble base 5-methylaminomethyl-2-thiouridine (mnm(5)s(2)U) in tRNA. Interacts with IscS and stimulates its cysteine desulfurase activity. Accepts an activated sulfur from IscS, which is then transferred to TusD, and thus determines the direction of sulfur flow from IscS to 2-thiouridine formation. Also appears to be involved in sulfur transfer for the biosynthesis of molybdopterin. This is Sulfur carrier protein TusA from Sodalis glossinidius (strain morsitans).